The sequence spans 313 residues: Malate dehydrogenase (313 aa).

NAD(+)-binding positions include 11 to 16 (GSGNIG) and D35. R84 and R90 together coordinate substrate. Residues N97 and 120–122 (VTN) each bind NAD(+). N122 and R153 together coordinate substrate. H177 serves as the catalytic Proton acceptor.

The protein belongs to the LDH/MDH superfamily. MDH type 3 family.

It carries out the reaction (S)-malate + NAD(+) = oxaloacetate + NADH + H(+). In terms of biological role, catalyzes the reversible oxidation of malate to oxaloacetate. The protein is Malate dehydrogenase of Ehrlichia ruminantium (strain Welgevonden).